A 293-amino-acid polypeptide reads, in one-letter code: Ribosomal protein L11 methyltransferase (293 aa).

S-adenosyl-L-methionine contacts are provided by threonine 145, glycine 166, aspartate 188, and asparagine 230.

The protein belongs to the methyltransferase superfamily. PrmA family.

The protein resides in the cytoplasm. The catalysed reaction is L-lysyl-[protein] + 3 S-adenosyl-L-methionine = N(6),N(6),N(6)-trimethyl-L-lysyl-[protein] + 3 S-adenosyl-L-homocysteine + 3 H(+). Its function is as follows. Methylates ribosomal protein L11. This is Ribosomal protein L11 methyltransferase from Shewanella piezotolerans (strain WP3 / JCM 13877).